The chain runs to 338 residues: VQEPSEPDCMLGIGKGYQGKKATTVTGTRCQAWAAQEPHRHSIFTPEANPWANLEKNYCRNPDGDVNGPWCYTMNPQKLFDYCDVPQCESSPFDCGKPKVEPKKCSGRIVGGCVAIAHSWPWQISLRTRFGRHFCGGTLISPEWVLTAAHCLERSSRPSTYKVVLGTHHELRLAAGAQQIDVSKLFLEPSRADIALLKLSSPAIITQNVIPACLPPADYVVANWAECFVTGWGETQDSSNAGVLKEAQLPVIENKVCNRYEYLNGRVKSTELCAGHLVGGVDSCQGDSGGPLVCFEKDKYILQGVTSWGLGCARPNKPGVYVRVSSFINWIERIMQSN.

The region spanning 9–88 (CMLGIGKGYQ…LFDYCDVPQC (80 aa)) is the Kringle 5 domain. 9 disulfide bridges follow: Cys-9/Cys-88, Cys-30/Cys-71, Cys-59/Cys-83, Cys-95/Cys-213, Cys-105/Cys-113, Cys-135/Cys-151, Cys-227/Cys-294, Cys-257/Cys-273, and Cys-284/Cys-312. The 228-residue stretch at 109–336 (IVGGCVAIAH…FINWIERIMQ (228 aa)) folds into the Peptidase S1 domain. Ser-125 is modified (phosphoserine). Active-site charge relay system residues include His-150 and Asp-193. Residue Ser-288 is the Charge relay system of the active site.

The protein belongs to the peptidase S1 family. Plasminogen subfamily. As to quaternary structure, interacts with CSPG4 and AMOT. Interacts (via the Kringle domains) with HRG; the interaction tethers PLG to the cell surface and enhances its activation. Interacts (via Kringle 4 domain) with ADA; the interaction stimulates PLG activation when in complex with DPP4. Angiostatin: Interacts with ATP5F1A; the interaction inhibits most of the angiogenic effects of angiostatin.

Its subcellular location is the secreted. The enzyme catalyses Preferential cleavage: Lys-|-Xaa &gt; Arg-|-Xaa, higher selectivity than trypsin. Converts fibrin into soluble products.. With respect to regulation, converted into plasmin by plasminogen activators, both plasminogen and its activator being bound to fibrin. Activated with catalytic amounts of streptokinase. Plasmin dissolves the fibrin of blood clots and acts as a proteolytic factor in a variety of other processes including embryonic development, tissue remodeling, tumor invasion, and inflammation. In ovulation, weakens the walls of the Graafian follicle. It activates the urokinase-type plasminogen activator, collagenases and several complement zymogens, such as C1, C4 and C5. Cleavage of fibronectin and laminin leads to cell detachment and apoptosis. Also cleaves fibrin, thrombospondin and von Willebrand factor. Its role in tissue remodeling and tumor invasion may be modulated by CSPG4. Binds to cells. The chain is Plasminogen (PLG) from Equus caballus (Horse).